The chain runs to 128 residues: Large ribosomal subunit protein bL17 (128 aa).

Belongs to the bacterial ribosomal protein bL17 family. In terms of assembly, part of the 50S ribosomal subunit. Contacts protein L32.

The sequence is that of Large ribosomal subunit protein bL17 from Hydrogenovibrio crunogenus (strain DSM 25203 / XCL-2) (Thiomicrospira crunogena).